We begin with the raw amino-acid sequence, 591 residues long: Aspartate--tRNA ligase (591 aa).

Residue glutamate 175 coordinates L-aspartate. Residues 199 to 202 are aspartate; it reads QLFK. L-aspartate is bound at residue arginine 221. ATP is bound by residues 221–223 and glutamine 230; that span reads RDE. Residue histidine 449 coordinates L-aspartate. Glutamate 483 lines the ATP pocket. An L-aspartate-binding site is contributed by arginine 490. ATP is bound at residue 535 to 538; sequence GLDR.

Belongs to the class-II aminoacyl-tRNA synthetase family. Type 1 subfamily. As to quaternary structure, homodimer.

It is found in the cytoplasm. It catalyses the reaction tRNA(Asp) + L-aspartate + ATP = L-aspartyl-tRNA(Asp) + AMP + diphosphate. In terms of biological role, catalyzes the attachment of L-aspartate to tRNA(Asp) in a two-step reaction: L-aspartate is first activated by ATP to form Asp-AMP and then transferred to the acceptor end of tRNA(Asp). This Oceanobacillus iheyensis (strain DSM 14371 / CIP 107618 / JCM 11309 / KCTC 3954 / HTE831) protein is Aspartate--tRNA ligase.